We begin with the raw amino-acid sequence, 178 residues long: Large ribosomal subunit protein uL6 (178 aa).

This sequence belongs to the universal ribosomal protein uL6 family. In terms of assembly, part of the 50S ribosomal subunit.

Its function is as follows. This protein binds to the 23S rRNA, and is important in its secondary structure. It is located near the subunit interface in the base of the L7/L12 stalk, and near the tRNA binding site of the peptidyltransferase center. This Helicobacter pylori (strain P12) protein is Large ribosomal subunit protein uL6.